A 141-amino-acid polypeptide reads, in one-letter code: Large ribosomal subunit protein uL11 (141 aa).

It belongs to the universal ribosomal protein uL11 family. In terms of assembly, part of the ribosomal stalk of the 50S ribosomal subunit. Interacts with L10 and the large rRNA to form the base of the stalk. L10 forms an elongated spine to which L12 dimers bind in a sequential fashion forming a multimeric L10(L12)X complex. One or more lysine residues are methylated.

Its function is as follows. Forms part of the ribosomal stalk which helps the ribosome interact with GTP-bound translation factors. This Campylobacter concisus (strain 13826) protein is Large ribosomal subunit protein uL11.